The chain runs to 723 residues: ADP-ribosylation factor-binding protein GGA3 (723 aa).

The interval 1-313 (MAEAEGESLE…GEVATLTLPD (313 aa)) is binds to ARF1 (in long isoform). Residues 16–146 (ATNPSNRQED…MLKRQGIVQS (131 aa)) form the VHS domain. 2 positions are modified to phosphoserine: S159 and S275. The region spanning 171–298 (DEEKSKLLAK…VINSYKTIIE (128 aa)) is the GAT domain. Residues 299–593 (GQVINGEVAT…IHVPLESIKP (295 aa)) form a unstructured hinge region. The segment at 339–384 (SSVLAPAPTPPSSGIPILPPPPQASGPPRSRSSSQAEATLGPSSTS) is disordered. A compositionally biased stretch (pro residues) spans 345-363 (APTPPSSGIPILPPPPQAS). Residues 364–374 (GPPRSRSSSQA) are compositionally biased toward low complexity. A DXXLL motif is present at residues 391-395 (DEELL). Residues 428 to 464 (DFFSPRPGTAACGASDAPLLQPSAPSSSSSQAPLPPP) are disordered. Over residues 441 to 459 (ASDAPLLQPSAPSSSSSQA) the composition is skewed to low complexity. A GAE domain is found at 594–715 (SSALPVTAYD…TEVGEVDQFP (122 aa)).

The protein belongs to the GGA protein family. In terms of assembly, monomer. Interacts with GGA1 and GGA2. Binds to clathrin and activated ARFs, such as ARF1, ARF5 and ARF6. Binds RABEP1 and RABGEF1. Interacts with the membrane proteins M6PR/CD-MPR and IGF2R/CI-MPR and the accessory proteins SYNRG, EPN4, NECAP1, NECAP2 and AFTPH/aftiphilin. Interacts with TSG101 and UBC. Interacts with ADRA2B. Interacts with NTRK1; the interaction is independent of NTRK1 activation and ubiquitination. Interacts (via VHS domain) with BACE1 (via DXXLL motif). Phosphorylated by CK2 and dephosphorylated by PP2A. Phosphorylation of GGA3 allows the internal DXXLL motif to bind the VHS domain and to inhibit the recognition of cargo signals. Post-translationally, ubiquitinated. In terms of processing, proteolytically cleaved during apoptosis by CASP3. As to expression, ubiquitously expressed.

It is found in the golgi apparatus. It localises to the trans-Golgi network membrane. The protein resides in the endosome membrane. The protein localises to the early endosome membrane. Its subcellular location is the recycling endosome membrane. Plays a role in protein sorting and trafficking between the trans-Golgi network (TGN) and endosomes. Mediates the ARF-dependent recruitment of clathrin to the TGN and binds ubiquitinated proteins and membrane cargo molecules with a cytosolic acidic cluster-dileucine (DXXLL) motif. Mediates export of the GPCR receptor ADRA2B to the cell surface. nvolved in BACE1 transport and sorting as well as regulation of BACE1 protein levels. Regulates retrograde transport of BACE1 from endosomes to the trans-Golgi network via interaction through the VHS motif and dependent of BACE1 phosphorylation. Modulates BACE1 protein levels independently of the interaction between VHS domain and DXXLL motif through recognition of ubiquitination. Key player in a novel DXXLL-mediated endosomal sorting machinery to the recycling pathway that targets NTRK1 to the plasma membrane. The polypeptide is ADP-ribosylation factor-binding protein GGA3 (Homo sapiens (Human)).